Here is a 316-residue protein sequence, read N- to C-terminus: MAEQLILKGTLEGHNGWVTSLATSMENPNMLLSSSRDKTLIIWNLTRDETSYGYPKRSLKGHSHIVSDCVISSDGAYALSASWDKTLRLWELATGTTTRRFVGHTNDVLSVSFSADNRQIVSGSRDRSIKLWNTLGDCKYTITEKGHSEWVSCVRFSPNPQNPVIVSSGWDKLVKVWELSSCKLQTDHIGHTGYINTVTISPDGSLCASGGKDGTTMLWDLNESKHLYSLNANDEIHALVFSPNRYWLCAATASSIIIFDLEKKSKVDELKPEFAAVGKKSREPECISLAWSADGQTLFAGYTDNIIRAWGVMSRA.

WD repeat units follow at residues 13–53 (GHNG…TSYG), 61–100 (GHSH…TTRR), 103–142 (GHTN…KYTI), 146–187 (GHSE…LQTD), 190–229 (GHTG…HLYS), 231–269 (NAND…KVDE), and 281–316 (SREP…MSRA).

This sequence belongs to the WD repeat G protein beta family. Ribosomal protein RACK1 subfamily. Interacts with MST50 and MCK1.

Involved in regulating the cell wall integrity and MPS1 activation via its interaction with the MAPKKK MCK1. The chain is MST50-interacting protein 11 from Pyricularia oryzae (strain 70-15 / ATCC MYA-4617 / FGSC 8958) (Rice blast fungus).